The chain runs to 331 residues: N-arachidonyl glycine receptor (331 aa).

The Extracellular segment spans residues 1 to 26 (MATLSNHNQLDLSNGSHPEEYKIAAL). A glycan (N-linked (GlcNAc...) asparagine) is linked at Asn14. A helical membrane pass occupies residues 27-47 (VFYSCIFLIGLFVNVTALWVF). The Cytoplasmic segment spans residues 48-56 (SCTTKKRTT). Residues 57–77 (VTIYMMNVALLDLVFILSLPF) form a helical membrane-spanning segment. Residues 78 to 95 (RMFYYAKGEWPFGEYFCH) lie on the Extracellular side of the membrane. Cys94 and Cys172 form a disulfide bridge. A helical membrane pass occupies residues 96-116 (ILGALVVFYPSLALWLLAFIS). At 117-138 (ADRYMAIVQPKYAKELKNTGKA) the chain is on the cytoplasmic side. The chain crosses the membrane as a helical span at residues 139 to 159 (VLACGGVWVMTLTTTVPLLLL). Residues 160 to 191 (YEDPDKASSPATCLKISDITHLKAVNVLNFTR) are Extracellular-facing. The N-linked (GlcNAc...) asparagine glycan is linked to Asn188. The chain crosses the membrane as a helical span at residues 192–212 (LIFFFLIPLFIMIGCYVVIIH). At 213 to 236 (SLLRGQTSKLKPKVKEKSIRIIMT) the chain is on the cytoplasmic side. Residues 237–257 (LLLQVLVCFVPFHICFAVLML) traverse the membrane as a helical segment. Over 258-268 (QGQENSYSPWG) the chain is Extracellular. Residues 269–289 (AFTTFLMNLSTCLDVVLYYIV) form a helical membrane-spanning segment. At 290 to 331 (SKQFQARVISVMLYRNYLRSVRRKSVRSGSLRSLSNMNSEML) the chain is on the cytoplasmic side. The residue at position 322 (Ser322) is a Phosphoserine.

It belongs to the G-protein coupled receptor 1 family. Expressed in the eye including cornea, retina, iris and ciliary epithelium (at protein level). Expressed in spleen, liver and lymphocytes with highest expression levels in intestinal intraepithelial lymphocytes.

Its subcellular location is the cell membrane. The protein localises to the cytoplasmic vesicle membrane. G protein-coupled receptor (GPCR) that plays a role in diverse physiological processes particularly within the immune and nervous systems. Becomes active when triggered by various endogenous ligands including endocannabinoid N-arachidonyl glycine (NAGly), delta-9-tetrahydrocannabinol or resolvin D2/RvD2 derived from the omega-3 fatty acid docosahexaenoic acid (DHA). Upon RvD2 binding, facilitates the resolution of inflammation, aiding in tissue repair and homeostasis. Mechanistically, RvD2 ligation initiates Galphas protein coupling, activation of cAMP-PKA signaling pathway and phosphorylation of STAT3, leading to RvD2-stimulated macrophage phagocytosis. Mediates NAGly-induced process of reorganization of actin filaments and induction of acrosomal exocytosis. Activation by N-arachidonoyl glycine (NAGly) can also induce apoptosis in macrophages. Plays a role in homeostasis of CD8+ subsets of intraepithelial lymphocytes (IELs) (CD8alphaalpha and CD8alphabeta IELs) in small intestine by supporting preferential migration of CD8alphaalpha T-cells to intraepithelial compartment over lamina propria compartment, and by mediating their reconstitution into small intestine after bone marrow transplant. Also participates in hypotensive responses, mediating reduction in intraocular and blood pressure. This Mus musculus (Mouse) protein is N-arachidonyl glycine receptor.